A 450-amino-acid polypeptide reads, in one-letter code: MNGQHSSPGTPVQRPSAGPVNQAQFSQQRTNQLTSLLHTMTMYQQLAQNVGLNTPQGQVYLLQAQTIRRQLQGHAQSGQLPNQQLLQQLQSNGALQQGTPEPSNTRPRPQLNAQEQTMLLVRHRQLQTAQNYLTEMKEALGRIKNELSTNERLDTSAREALVKQESELTVKIAQFTAAISNGIRSIQQLQNRQASSANGNNTGTSTPVNASTDTRKSTASTPQLQQTQAQANAPQQRINPETSSVPETPVGVSAANVSNESTELATSATQQSGLANNVEKSQTPSYMSANHLPKVDSKSPIPFSVPPSRATLTGGYASGSIGLSTPGLSRAPHYELDNGNRLLSKRKLHDLLQQIDSEEKIEPEVEELLLEIADEFVESVTNFACRLAKHRKSDTLDVRDVQLHLERNWNIRLPGFASDDIVKSARKTGPTPSYQQKQNAIGTAKSLNKD.

3 stretches are compositionally biased toward polar residues: residues 1–10 (MNGQHSSPGT), 19–29 (PVNQAQFSQQR), and 190–212 (QNRQ…NAST). Disordered regions lie at residues 1–29 (MNGQ…SQQR) and 190–281 (QNRQ…VEKS). Low complexity predominate over residues 217 to 236 (STASTPQLQQTQAQANAPQQ). Polar residues-rich tracts occupy residues 237-246 (RINPETSSVP) and 255-281 (ANVS…VEKS). Ser297 is subject to Phosphoserine. One can recognise a Histone-fold domain in the interval 338 to 413 (NGNRLLSKRK…HLERNWNIRL (76 aa)). The segment at 426–450 (RKTGPTPSYQQKQNAIGTAKSLNKD) is disordered. The segment covering 430-441 (PTPSYQQKQNAI) has biased composition (polar residues).

The protein belongs to the TAF12 family. As to quaternary structure, component of the 1.8 MDa SAGA (Spt-Ada-Gcn5 acetyltransferase) complex, which is composed of 19 subunits tra1, spt7, taf5, ngg1/ada3, sgf73, spt20, spt8, taf12, taf6, hfi1/ada1, ubp8, gcn5, ada2, spt3, sgf29, taf10, taf9, sgf11 and sus1. The SAGA complex is composed of 4 modules, namely the HAT (histone acetyltransferase) module (gcn5, ada2, ngg1/ada3 and sgf29), the DUB (deubiquitinating) module (ubp8, sgf11, sgf73 and sus1), the core or TAF (TBP-associated factor) module (taf5, taf6, taf9, taf10 and taf12), and the Tra1 or SPT (Suppressor of Ty) module (tra1, hfi1/ada1, spt3, spt7, spt8 and spt20). The Tra1/SPT module binds activators, the core module recruits TBP (TATA-binding protein), the HAT module contains the histone H3 acetyltransferase gcn5, and the DUB module comprises the histone H2B deubiquitinase ubp8. Component of the 1.2 MDa TFIID complex, which is composed of TATA-binding protein (TBP) and the 14 TBP-associated factors (TAFs). It comprises 1 copy of each taf1, taf2, taf3, taf7, taf8, taf11, taf13, 2 copies of each taf4, taf5, taf6, taf9, taf10, taf12, and 3 copies of taf14. In TFIID, taf12 heterodimerizes with taf4, forming ultimately an octamer consisting of a taf6-taf9 heterotetramer core flanked by taf4-taf12 dimers on either side, similar to the histone H2A-H2B-H3-H4 octamer.

Its subcellular location is the nucleus. Functionally, functions as a component of both the DNA-binding general transcription initiation factor complex TFIID and the transcription coactivator SAGA complex. Binding of TFIID to a promoter (with or without TATA element) is the initial step in pre-initiation complex (PIC) formation. TFIID plays a key role in the regulation of gene expression by RNA polymerase II through different activities such as transcription activator interaction, core promoter recognition and selectivity, TFIIA and TFIIB interaction, chromatin modification (histone acetylation by TAF1), facilitation of DNA opening and initiation of transcription. SAGA acts as a general cofactor required for essentially all RNA polymerase II transcription. At the promoters, SAGA is required for transcription pre-initiation complex (PIC) recruitment. It influences RNA polymerase II transcriptional activity through different activities such as TBP interaction (via core/TAF module) and promoter selectivity, interaction with transcription activators (via Tra1/SPT module), and chromatin modification through histone acetylation (via HAT module) and deubiquitination (via DUB module). SAGA preferentially acetylates histones H3 (to form H3K9ac, H3K14ac, H3K18ac and H3K23ac) and H2B and deubiquitinates histone H2B. SAGA interacts with DNA via upstream activating sequences (UASs). This chain is SAGA complex/transcription factor TFIID complex subunit Taf12, found in Schizosaccharomyces pombe (strain 972 / ATCC 24843) (Fission yeast).